A 229-amino-acid chain; its full sequence is MIEVCPENVRIEESWKKVLYEQFSQDYFVRIKETLLAAKAQGIVTYPPNKLIFNAFDQTPFDAVKAVIIGQDPYHGRGQAMGLSFSVPKGVRPPPSLLNIYKELKRSYPDFQVPDHGDLSAWAKQGVLLLNASLTVEAGKAGSHRAIGWQEFTHAAIEALSNEREHIVFMLWGNFAKAKAQFIDAEKHCILTAVHPSPLAGGAFIGCDHFRRANDYLIAHGKTPINWQV.

The active-site Proton acceptor is the aspartate 72.

The protein belongs to the uracil-DNA glycosylase (UDG) superfamily. UNG family.

The protein localises to the cytoplasm. It carries out the reaction Hydrolyzes single-stranded DNA or mismatched double-stranded DNA and polynucleotides, releasing free uracil.. Its function is as follows. Excises uracil residues from the DNA which can arise as a result of misincorporation of dUMP residues by DNA polymerase or due to deamination of cytosine. This is Uracil-DNA glycosylase from Dichelobacter nodosus (strain VCS1703A).